A 172-amino-acid chain; its full sequence is UPF0102 protein AM1_3954 (172 aa).

The protein belongs to the UPF0102 family.

This Acaryochloris marina (strain MBIC 11017) protein is UPF0102 protein AM1_3954.